The primary structure comprises 322 residues: Lipoyl synthase (322 aa).

Over residues methionine 1 to glycine 12 the composition is skewed to polar residues. Residues methionine 1–arginine 22 form a disordered region. 7 residues coordinate [4Fe-4S] cluster: cysteine 60, cysteine 65, cysteine 71, cysteine 86, cysteine 90, cysteine 93, and serine 299. A Radical SAM core domain is found at tryptophan 72 to leucine 288.

This sequence belongs to the radical SAM superfamily. Lipoyl synthase family. [4Fe-4S] cluster serves as cofactor.

It localises to the cytoplasm. It carries out the reaction [[Fe-S] cluster scaffold protein carrying a second [4Fe-4S](2+) cluster] + N(6)-octanoyl-L-lysyl-[protein] + 2 oxidized [2Fe-2S]-[ferredoxin] + 2 S-adenosyl-L-methionine + 4 H(+) = [[Fe-S] cluster scaffold protein] + N(6)-[(R)-dihydrolipoyl]-L-lysyl-[protein] + 4 Fe(3+) + 2 hydrogen sulfide + 2 5'-deoxyadenosine + 2 L-methionine + 2 reduced [2Fe-2S]-[ferredoxin]. Its pathway is protein modification; protein lipoylation via endogenous pathway; protein N(6)-(lipoyl)lysine from octanoyl-[acyl-carrier-protein]: step 2/2. In terms of biological role, catalyzes the radical-mediated insertion of two sulfur atoms into the C-6 and C-8 positions of the octanoyl moiety bound to the lipoyl domains of lipoate-dependent enzymes, thereby converting the octanoylated domains into lipoylated derivatives. In Brucella abortus (strain S19), this protein is Lipoyl synthase.